The chain runs to 540 residues: Methionine--tRNA ligase 1 (540 aa).

The 'HIGH' region signature appears at 10 to 20; sequence PYANGSLHLGH. Residues Cys-141, Cys-144, Cys-153, and Cys-156 each contribute to the Zn(2+) site. The short motif at 327-331 is the 'KMSKS' region element; that stretch reads KISTS. Thr-330 serves as a coordination point for ATP.

Belongs to the class-I aminoacyl-tRNA synthetase family. MetG type 1 subfamily. Monomer. Zn(2+) serves as cofactor.

The protein resides in the cytoplasm. It catalyses the reaction tRNA(Met) + L-methionine + ATP = L-methionyl-tRNA(Met) + AMP + diphosphate. Functionally, is required not only for elongation of protein synthesis but also for the initiation of all mRNA translation through initiator tRNA(fMet) aminoacylation. In Alkaliphilus oremlandii (strain OhILAs) (Clostridium oremlandii (strain OhILAs)), this protein is Methionine--tRNA ligase 1.